The chain runs to 471 residues: Putative multidrug resistance protein MdtD (471 aa).

Over 1-11 (MTDLPDSTRWQ) the chain is Periplasmic. A helical membrane pass occupies residues 12 to 32 (LWIVAFGFFMQSLDTTIVNTA). At 33–48 (LPSMAQSLGESPLHMH) the chain is on the cytoplasmic side. Residues 49 to 69 (MVIVSYVLTVAVMLPASGWLA) traverse the membrane as a helical segment. At 70–76 (DKVGVRN) the chain is on the periplasmic side. The helical transmembrane segment at 77–97 (IFFTAIVLFTLGSLFCALSGT) threads the bilayer. Over 98–101 (LNEL) the chain is Cytoplasmic. The chain crosses the membrane as a helical span at residues 102–124 (LLARALQGVGGAMMVPVGRLTVM). The Periplasmic portion of the chain corresponds to 125-137 (KIVPREQYMAAMT). The helical transmembrane segment at 138–158 (FVTLPGQVGPLLGPALGGLLV) threads the bilayer. Residues 159 to 164 (EYASWH) are Cytoplasmic-facing. Residues 165–185 (WIFLINIPVGIIGAIATLMLM) traverse the membrane as a helical segment. Topologically, residues 186–196 (PNYTMQTRRFD) are periplasmic. A helical membrane pass occupies residues 197-217 (LSGFLLLAVGMAVLTLALDGS). Topologically, residues 218–224 (KGTGLSP) are cytoplasmic. Residues 225 to 245 (LTIAGLVAVGVVALVLYLLHA) form a helical membrane-spanning segment. The Periplasmic portion of the chain corresponds to 246-262 (RNNNRALFSLKLFRTRT). The helical transmembrane segment at 263–283 (FSLGLAGSFAGRIGSGMLPFM) threads the bilayer. At 284-285 (TP) the chain is on the cytoplasmic side. Residues 286–306 (VFLQIGLGFSPFHAGLMMIPM) form a helical membrane-spanning segment. Topologically, residues 307–341 (VLGSMGMKRIVVQVVNCFGYRRVLVATTLGLSLVT) are periplasmic. A helical transmembrane segment spans residues 342 to 362 (LLFMTTALLGWYYVLPFVLFL). At 363-395 (QGMVNSTRFSSMNTLTLKDLPDNLASSGNSLLS) the chain is on the cytoplasmic side. Residues 396 to 416 (MIMQLSMSIGVTIAGLLLGLF) traverse the membrane as a helical segment. Residues 417 to 430 (GSQHVSVDSGTTQT) lie on the Periplasmic side of the membrane. The chain crosses the membrane as a helical span at residues 431–451 (VFMYTWLSMALIIALPAFIFA). The Cytoplasmic portion of the chain corresponds to 452-471 (RVPNDTHQNVAISRRKRSAQ).

This sequence belongs to the major facilitator superfamily. TCR/Tet family.

The protein resides in the cell inner membrane. The polypeptide is Putative multidrug resistance protein MdtD (Escherichia coli O139:H28 (strain E24377A / ETEC)).